The chain runs to 150 residues: Large ribosomal subunit protein bL9 (150 aa).

It belongs to the bacterial ribosomal protein bL9 family.

Functionally, binds to the 23S rRNA. The protein is Large ribosomal subunit protein bL9 of Streptococcus equi subsp. equi (strain 4047).